The chain runs to 325 residues: Malate dehydrogenase (325 aa).

11–17 serves as a coordination point for NAD(+); that stretch reads GAAGHVS. Arginine 92 and arginine 98 together coordinate substrate. NAD(+) contacts are provided by residues asparagine 105, glutamine 112, and 129 to 131; that span reads VGN. Substrate is bound by residues asparagine 131 and arginine 162. The Proton acceptor role is filled by histidine 187.

Belongs to the LDH/MDH superfamily. MDH type 2 family.

It catalyses the reaction (S)-malate + NAD(+) = oxaloacetate + NADH + H(+). In terms of biological role, catalyzes the reversible oxidation of malate to oxaloacetate. The chain is Malate dehydrogenase from Desulfotalea psychrophila (strain LSv54 / DSM 12343).